Here is a 77-residue protein sequence, read N- to C-terminus: Conotoxin Vc6b (77 aa).

Positions 1–22 (MKLTCMMIVAVLFLTANTFVTA) are cleaved as a signal peptide. The propeptide occupies 23-47 (DDSGNGMENLFPKAGHEMENLEASN). Disulfide bonds link C52–C66, C59–C72, and C67–C76.

Expressed by the venom duct.

The protein resides in the secreted. This chain is Conotoxin Vc6b, found in Conus victoriae (Queen Victoria cone).